A 350-amino-acid chain; its full sequence is D-alanine--D-alanine ligase (350 aa).

The region spanning K138–Q346 is the ATP-grasp domain. E173–E228 lines the ATP pocket. Mg(2+) contacts are provided by D299, E313, and N315.

It belongs to the D-alanine--D-alanine ligase family. The cofactor is Mg(2+). It depends on Mn(2+) as a cofactor.

It is found in the cytoplasm. The catalysed reaction is 2 D-alanine + ATP = D-alanyl-D-alanine + ADP + phosphate + H(+). The protein operates within cell wall biogenesis; peptidoglycan biosynthesis. Its function is as follows. Cell wall formation. This chain is D-alanine--D-alanine ligase, found in Synechococcus sp. (strain CC9605).